The primary structure comprises 124 residues: Putative transmembrane protein FLJ36131 (124 aa).

Over 1 to 2 (MY) the chain is Cytoplasmic. A helical membrane pass occupies residues 3–23 (VSISFLLGLSHLVLCCLLTFI). At 24-124 (VNFYLPPESI…LLTTTSYSVS (101 aa)) the chain is on the extracellular side. An N-linked (GlcNAc...) asparagine glycan is attached at Asn-41.

The protein resides in the membrane. This Homo sapiens (Human) protein is Putative transmembrane protein FLJ36131.